The sequence spans 273 residues: Shikimate dehydrogenase (NADP(+)) (273 aa).

Residues 15–17 (SKS) and threonine 62 each bind shikimate. The Proton acceptor role is filled by lysine 66. Aspartate 78 contacts NADP(+). The shikimate site is built by asparagine 87 and aspartate 103. NADP(+) is bound by residues 127–131 (GAGGA), 150–155 (NRTYAR), and methionine 214. Tyrosine 216 lines the shikimate pocket. Glycine 238 contacts NADP(+).

Belongs to the shikimate dehydrogenase family. As to quaternary structure, homodimer.

The catalysed reaction is shikimate + NADP(+) = 3-dehydroshikimate + NADPH + H(+). It functions in the pathway metabolic intermediate biosynthesis; chorismate biosynthesis; chorismate from D-erythrose 4-phosphate and phosphoenolpyruvate: step 4/7. In terms of biological role, involved in the biosynthesis of the chorismate, which leads to the biosynthesis of aromatic amino acids. Catalyzes the reversible NADPH linked reduction of 3-dehydroshikimate (DHSA) to yield shikimate (SA). The sequence is that of Shikimate dehydrogenase (NADP(+)) from Yersinia enterocolitica serotype O:8 / biotype 1B (strain NCTC 13174 / 8081).